The chain runs to 193 residues: Acyl carrier protein phosphodiesterase (193 aa).

The protein belongs to the AcpH family.

It catalyses the reaction holo-[ACP] + H2O = apo-[ACP] + (R)-4'-phosphopantetheine + H(+). Converts holo-ACP to apo-ACP by hydrolytic cleavage of the phosphopantetheine prosthetic group from ACP. The protein is Acyl carrier protein phosphodiesterase of Yersinia enterocolitica serotype O:8 / biotype 1B (strain NCTC 13174 / 8081).